Reading from the N-terminus, the 474-residue chain is MAGPWIITLLCGLLGATLVQANVYPPAVLNLGPEVIQKHLTQALKDHDATAILQELPLLRAMQDKSGSIPILDSFVHTVLRYIIWMKVTSANILQLDVQPSTYDQELVVRIPLDMVAGLNTPLIKTIVEFQMSTEVQALIRVERSKSGPAHLNLSDCSSNESTLRLSLLHKLSFVVNSLAKNVMNLLVPALPQIVKNHLCPVIQQAFDDMYEDFLRLTTAPIALSPGALEFGLLSPAIQDSNILLNLKAKLLDSQARVTNWFNNSATSLMETTPDRAPFSLTVRQDLVNAIVTTLVPKEELVILLRFVIPDVARQLQMDIKEINAEAANKLGPTQMLKIFTHSTPHIVLNEGSARAAQSVVLEVFPTNTDVRPFFSLGIEASYEAQFFTEDNRLMLNFNNVSIERIKLMISDIKLFDPEVLKDTLTKILEYTLLPNENGKLRTGVPMSMSKALGYEKAMWSVSKGALKLTPASS.

An N-terminal signal peptide occupies residues 1 to 21 (MAGPWIITLLCGLLGATLVQA). Residues asparagine 153, asparagine 160, asparagine 263, and asparagine 400 are each glycosylated (N-linked (GlcNAc...) asparagine). Cysteine 157 and cysteine 200 are joined by a disulfide.

Belongs to the BPI/LBP/Plunc superfamily. Plunc family. Expressed in tongue, lung, thymus, and stomach. Expressed in epithelia of palate, anterior pharynx, trachea and upper bronchi. Expressed in distal tip of papillae in the anterior third of the tongue and in serous cells of von Ebner glands in the posterior third of the tongue. Expressed in columnar epithelium of the duodenum in embryonic gut at 16.5 dpc.

It is found in the secreted. In terms of biological role, may play a role in innate immunity in mouth, nose and lungs. Binds bacterial lipopolysaccharide (LPS) and modulates the cellular responses to LPS. May be involved in formation of the left-right axis in the node of the developing embryo. The chain is BPI fold-containing family B member 1 (Bpifb1) from Mus musculus (Mouse).